The chain runs to 331 residues: Serpentine receptor class alpha-9 (331 aa).

7 helical membrane-spanning segments follow: residues 26-46 (IDLL…QLVL), 58-78 (LILE…IEAI), 104-124 (YLKV…GLMI), 142-162 (IIGF…GKLF), 189-209 (YFTV…LLKI), 238-258 (VCFL…GVGA), and 275-295 (LCVV…LLLI).

The protein belongs to the nematode receptor-like protein sra family.

Its subcellular location is the membrane. The chain is Serpentine receptor class alpha-9 (sra-9) from Caenorhabditis elegans.